A 140-amino-acid polypeptide reads, in one-letter code: Putative pre-16S rRNA nuclease (140 aa).

Belongs to the YqgF nuclease family.

The protein resides in the cytoplasm. Could be a nuclease involved in processing of the 5'-end of pre-16S rRNA. This is Putative pre-16S rRNA nuclease from Aeromonas salmonicida (strain A449).